The primary structure comprises 616 residues: 2-[(L-alanin-3-ylcarbamoyl)methyl]-3-(2-aminoethylcarbamoyl)-2-hydroxypropanoate synthase (616 aa).

Belongs to the IucA/IucC family. Forms a mixture of monomer and dimer in solution.

It catalyses the reaction 2-[(2-aminoethylcarbamoyl)methyl]-2-hydroxybutanedioate + (S)-2,3-diaminopropanoate + ATP = 2-[(L-alanin-3-ylcarbamoyl)methyl]-3-(2-aminoethylcarbamoyl)-2-hydroxypropanoate + AMP + diphosphate. It functions in the pathway siderophore biosynthesis. Its function is as follows. Catalyzes the condensation of L-2,3-diaminopropionic acid (L-Dap) and citryl-diaminoethane to form L-2,3-diaminopropionyl-citryl-diaminoethane, the third step in staphyloferrin B biosynthesis. The polypeptide is 2-[(L-alanin-3-ylcarbamoyl)methyl]-3-(2-aminoethylcarbamoyl)-2-hydroxypropanoate synthase (Staphylococcus aureus (strain NCTC 8325 / PS 47)).